The chain runs to 270 residues: Formamidopyrimidine-DNA glycosylase (270 aa).

Catalysis depends on Pro-2, which acts as the Schiff-base intermediate with DNA. Glu-3 serves as the catalytic Proton donor. Lys-58 functions as the Proton donor; for beta-elimination activity in the catalytic mechanism. His-91, Arg-110, and Arg-151 together coordinate DNA. The segment at 236 to 270 adopts an FPG-type zinc-finger fold; sequence LVYGRDGLPCPNCGRALKHATIGQRASVWCSHCQR. Arg-260 functions as the Proton donor; for delta-elimination activity in the catalytic mechanism.

The protein belongs to the FPG family. Monomer. Requires Zn(2+) as cofactor.

The enzyme catalyses Hydrolysis of DNA containing ring-opened 7-methylguanine residues, releasing 2,6-diamino-4-hydroxy-5-(N-methyl)formamidopyrimidine.. The catalysed reaction is 2'-deoxyribonucleotide-(2'-deoxyribose 5'-phosphate)-2'-deoxyribonucleotide-DNA = a 3'-end 2'-deoxyribonucleotide-(2,3-dehydro-2,3-deoxyribose 5'-phosphate)-DNA + a 5'-end 5'-phospho-2'-deoxyribonucleoside-DNA + H(+). Functionally, involved in base excision repair of DNA damaged by oxidation or by mutagenic agents. Acts as a DNA glycosylase that recognizes and removes damaged bases. Has a preference for oxidized purines, such as 7,8-dihydro-8-oxoguanine (8-oxoG). Has AP (apurinic/apyrimidinic) lyase activity and introduces nicks in the DNA strand. Cleaves the DNA backbone by beta-delta elimination to generate a single-strand break at the site of the removed base with both 3'- and 5'-phosphates. This Stenotrophomonas maltophilia (strain R551-3) protein is Formamidopyrimidine-DNA glycosylase.